A 327-amino-acid polypeptide reads, in one-letter code: uncharacterized protein (327 aa).

This is an uncharacterized protein from Lepidoptera (butterflies and moths).